A 367-amino-acid polypeptide reads, in one-letter code: Probable butyrate kinase (367 aa).

Belongs to the acetokinase family.

The protein resides in the cytoplasm. It carries out the reaction butanoate + ATP = butanoyl phosphate + ADP. This chain is Probable butyrate kinase, found in Bacillus cereus (strain G9842).